The primary structure comprises 122 residues: Holo-[acyl-carrier-protein] synthase (122 aa).

Mg(2+)-binding residues include D8 and E57.

The protein belongs to the P-Pant transferase superfamily. AcpS family. Mg(2+) serves as cofactor.

Its subcellular location is the cytoplasm. The catalysed reaction is apo-[ACP] + CoA = holo-[ACP] + adenosine 3',5'-bisphosphate + H(+). In terms of biological role, transfers the 4'-phosphopantetheine moiety from coenzyme A to a Ser of acyl-carrier-protein. This chain is Holo-[acyl-carrier-protein] synthase, found in Protochlamydia amoebophila (strain UWE25).